We begin with the raw amino-acid sequence, 532 residues long: Optineurin (532 aa).

Coiled coils occupy residues 27–143 and 195–466; these read SMKN…LKLG and EEVA…EEMM. The CCHC NOA-type zinc-finger motif lies at 502-532; the sequence is QPSITVYTCPKCNLTVPDMDTLQIHVMDCIT. 4 residues coordinate Zn(2+): C510, C513, H526, and C530.

The protein localises to the cytoplasm. Its subcellular location is the perinuclear region. It is found in the golgi apparatus. The protein resides in the trans-Golgi network. It localises to the cytoplasmic vesicle. The protein localises to the recycling endosome. Its subcellular location is the autophagosome. In terms of biological role, probably part of the TNF-alpha signaling pathway that can shift the equilibrium toward induction of cell death. May act by regulating membrane trafficking and cellular morphogenesis. This is Optineurin (optn) from Xenopus laevis (African clawed frog).